The primary structure comprises 233 residues: Ras-related protein RabV (233 aa).

Position 15-22 (15-22 (GEKEVGKS)) interacts with GTP. The Effector region signature appears at 37 to 45 (YIPTIGIDF). GTP contacts are provided by residues 63-67 (DYVSH) and 122-125 (TKSD). Positions 143 to 182 (QNNNNNNNNNNNNNNNNNNNNNNNNNNNNNSNNNNNNNLQ) are disordered. Over residues 144 to 180 (NNNNNNNNNNNNNNNNNNNNNNNNNNNNNSNNNNNNN) the composition is skewed to low complexity.

It belongs to the small GTPase superfamily. Rab family.

This is Ras-related protein RabV (rabV) from Dictyostelium discoideum (Social amoeba).